The primary structure comprises 369 residues: Putative agmatine deiminase (369 aa).

Cys-361 functions as the Amidino-cysteine intermediate in the catalytic mechanism.

This sequence belongs to the agmatine deiminase family.

It catalyses the reaction agmatine + H2O = N-carbamoylputrescine + NH4(+). The protein is Putative agmatine deiminase of Streptococcus mutans serotype c (strain ATCC 700610 / UA159).